The primary structure comprises 443 residues: Probable D-serine dehydratase (443 aa).

K106 is subject to N6-(pyridoxal phosphate)lysine.

Belongs to the serine/threonine dehydratase family. DsdA subfamily. Pyridoxal 5'-phosphate is required as a cofactor.

The enzyme catalyses D-serine = pyruvate + NH4(+). This Cupriavidus pinatubonensis (strain JMP 134 / LMG 1197) (Cupriavidus necator (strain JMP 134)) protein is Probable D-serine dehydratase.